The sequence spans 458 residues: Fasciclin-like arabinogalactan protein 17 (458 aa).

An N-terminal signal peptide occupies residues 1-30 (MDRRIYGGSAVIHLFLFFSVLIFSAASALS). An FAS1 1 domain is found at 43–184 (NSNSVLVALL…GLIHGIERLL (142 aa)). N-linked (GlcNAc...) asparagine glycosylation occurs at Asn-80. Residues 207–262 (PEGAPEVDPRTNRLKKPAAPVPAGSPPALPIQSAMAPGPSLAPAPAPGPGGKQHHF) are disordered. Pro residues predominate over residues 225 to 235 (APVPAGSPPAL). In terms of domain architecture, FAS1 2 spans 268 to 411 (VKDFIHTLLH…ISVQGIDGVL (144 aa)). Residue Asn-290 is glycosylated (N-linked (GlcNAc...) asparagine).

Belongs to the fasciclin-like AGP family.

It is found in the secreted. Its function is as follows. May be a cell surface adhesion protein. The polypeptide is Fasciclin-like arabinogalactan protein 17 (FLA17) (Arabidopsis thaliana (Mouse-ear cress)).